The following is a 48-amino-acid chain: ATP synthase protein 8 (48 aa).

The chain crosses the membrane as a helical span at residues 12–32 (LLTGGILAISLLLYFVATYLL).

It belongs to the ATPase protein 8 family. F-type ATPases have 2 components, CF(1) - the catalytic core - and CF(0) - the membrane proton channel.

Its subcellular location is the mitochondrion membrane. Functionally, mitochondrial membrane ATP synthase (F(1)F(0) ATP synthase or Complex V) produces ATP from ADP in the presence of a proton gradient across the membrane which is generated by electron transport complexes of the respiratory chain. F-type ATPases consist of two structural domains, F(1) - containing the extramembraneous catalytic core and F(0) - containing the membrane proton channel, linked together by a central stalk and a peripheral stalk. During catalysis, ATP synthesis in the catalytic domain of F(1) is coupled via a rotary mechanism of the central stalk subunits to proton translocation. Part of the complex F(0) domain. Minor subunit located with subunit a in the membrane. The chain is ATP synthase protein 8 (ATP8) from Candida parapsilosis (Yeast).